The chain runs to 108 residues: Tetrahydromethanopterin S-methyltransferase subunit B (108 aa).

The helical transmembrane segment at 79–99 threads the bilayer; the sequence is GMFFGFWVTMAILVLVTILAV.

The protein belongs to the MtrB family. The complex is composed of 8 subunits; MtrA, MtrB, MtrC, MtrD, MtrE, MtrF, MtrG and MtrH.

It localises to the cell membrane. It carries out the reaction 5-methyl-5,6,7,8-tetrahydromethanopterin + coenzyme M + 2 Na(+)(in) = 5,6,7,8-tetrahydromethanopterin + methyl-coenzyme M + 2 Na(+)(out). Its pathway is one-carbon metabolism; methanogenesis from CO(2); methyl-coenzyme M from 5,10-methylene-5,6,7,8-tetrahydromethanopterin: step 2/2. Its function is as follows. Part of a complex that catalyzes the formation of methyl-coenzyme M and tetrahydromethanopterin from coenzyme M and methyl-tetrahydromethanopterin. This is an energy-conserving, sodium-ion translocating step. This Methanococcus maripaludis (strain C5 / ATCC BAA-1333) protein is Tetrahydromethanopterin S-methyltransferase subunit B.